We begin with the raw amino-acid sequence, 152 residues long: Transcriptional repressor NrdR (152 aa).

The segment at 3–34 (CPFCHNEQSRVIDSRVIDSGTSIRRRRECAAC) is a zinc-finger region. Residues 46-136 (LSVVKRNGLA…VYKSFESADD (91 aa)) form the ATP-cone domain.

It belongs to the NrdR family. Zn(2+) serves as cofactor.

In terms of biological role, negatively regulates transcription of bacterial ribonucleotide reductase nrd genes and operons by binding to NrdR-boxes. The polypeptide is Transcriptional repressor NrdR (Corynebacterium aurimucosum (strain ATCC 700975 / DSM 44827 / CIP 107346 / CN-1) (Corynebacterium nigricans)).